The primary structure comprises 70 residues: DNA gyrase inhibitor YacG (70 aa).

4 residues coordinate Zn(2+): C7, C10, C26, and C30.

The protein belongs to the DNA gyrase inhibitor YacG family. Interacts with GyrB. The cofactor is Zn(2+).

Functionally, inhibits all the catalytic activities of DNA gyrase by preventing its interaction with DNA. Acts by binding directly to the C-terminal domain of GyrB, which probably disrupts DNA binding by the gyrase. The chain is DNA gyrase inhibitor YacG from Shewanella sediminis (strain HAW-EB3).